A 257-amino-acid polypeptide reads, in one-letter code: Putative hydro-lyase Bcen2424_3550 (257 aa).

It belongs to the D-glutamate cyclase family.

This Burkholderia cenocepacia (strain HI2424) protein is Putative hydro-lyase Bcen2424_3550.